Here is a 234-residue protein sequence, read N- to C-terminus: UPF0502 protein BTH_II0990 (234 aa).

Belongs to the UPF0502 family.

The chain is UPF0502 protein BTH_II0990 from Burkholderia thailandensis (strain ATCC 700388 / DSM 13276 / CCUG 48851 / CIP 106301 / E264).